A 103-amino-acid polypeptide reads, in one-letter code: Large ribosomal subunit protein bL21 (103 aa).

Belongs to the bacterial ribosomal protein bL21 family. In terms of assembly, part of the 50S ribosomal subunit. Contacts protein L20.

Its function is as follows. This protein binds to 23S rRNA in the presence of protein L20. The sequence is that of Large ribosomal subunit protein bL21 from Azoarcus sp. (strain BH72).